Reading from the N-terminus, the 499-residue chain is L-arabinose isomerase (499 aa).

Glutamate 306, glutamate 333, histidine 350, and histidine 449 together coordinate Mn(2+).

The protein belongs to the arabinose isomerase family. Mn(2+) is required as a cofactor.

It catalyses the reaction beta-L-arabinopyranose = L-ribulose. The protein operates within carbohydrate degradation; L-arabinose degradation via L-ribulose; D-xylulose 5-phosphate from L-arabinose (bacterial route): step 1/3. Catalyzes the conversion of L-arabinose to L-ribulose. This Tolumonas auensis (strain DSM 9187 / NBRC 110442 / TA 4) protein is L-arabinose isomerase.